The chain runs to 273 residues: DNA repair protein RecO (273 aa).

A disordered region spans residues 250-273; sequence NVGQNPSGKDDLNERRDVDGTGES. Residues 257 to 273 show a composition bias toward basic and acidic residues; it reads GKDDLNERRDVDGTGES.

It belongs to the RecO family.

Functionally, involved in DNA repair and RecF pathway recombination. The chain is DNA repair protein RecO from Desulfitobacterium hafniense (strain Y51).